The primary structure comprises 827 residues: Discs large homolog 1-like protein (827 aa).

Disordered stretches follow at residues 38 to 61 (HQDE…TPGP) and 102 to 133 (SPVV…ANPP). The segment covering 44–56 (GSPQEPSSPQFTD) has biased composition (polar residues). PDZ domains follow at residues 159–246 (EITL…RRRK), 254–341 (EIKL…AKPN), and 403–484 (KVVL…QYRP). The region spanning 518–588 (KRSLYVRALF…PSKRRVEKKE (71 aa)) is the SH3 domain. Residues 595-618 (VKFNSKSREKGDNPDDMLSKGQSG) form a disordered region. Positions 637-812 (SRPVIILGPM…IYDQVKQIIE (176 aa)) constitute a Guanylate kinase-like domain.

It belongs to the MAGUK family.

The protein localises to the membrane. In terms of biological role, may play a role in synapse assembly and function. The chain is Discs large homolog 1-like protein (dlg1l) from Danio rerio (Zebrafish).